The chain runs to 307 residues: Nicotinamide/nicotinic acid mononucleotide adenylyltransferase 2 (307 aa).

Residues S16 and F17 each coordinate NAD(+). ATP is bound at residue H24. Residues W92 and T95 each coordinate NAD(+). S-palmitoyl cysteine attachment occurs at residues C164 and C165. Positions 200, 202, 212, 213, and 232 each coordinate NAD(+). Residue 271 to 274 (TKSR) coordinates ATP.

This sequence belongs to the eukaryotic NMN adenylyltransferase family. In terms of assembly, monomer. The cofactor is Mg(2+). In terms of processing, degraded in response to injured neurite. Degradation is caused by polyubiquitination by MYCBP2 after recognition by FBXO45. Post-translationally, palmitoylated; palmitoylation is required for membrane association.

The protein resides in the golgi apparatus membrane. It is found in the cytoplasmic vesicle membrane. Its subcellular location is the cytoplasm. The protein localises to the cell projection. It localises to the axon. The enzyme catalyses beta-nicotinamide D-ribonucleotide + ATP + H(+) = diphosphate + NAD(+). It carries out the reaction nicotinate beta-D-ribonucleotide + ATP + H(+) = deamido-NAD(+) + diphosphate. It participates in cofactor biosynthesis; NAD(+) biosynthesis; NAD(+) from nicotinamide D-ribonucleotide: step 1/1. Its pathway is cofactor biosynthesis; NAD(+) biosynthesis; deamido-NAD(+) from nicotinate D-ribonucleotide: step 1/1. Its activity is regulated as follows. Inhibited by P1-(adenosine-5')-P3-(nicotinamide-riboside-5')-triphosphate (Np3AD) and P1-(adenosine-5')-P4-(nicotinamide-riboside-5')-tetraphosphate (Np4AD). Its function is as follows. Nicotinamide/nicotinate-nucleotide adenylyltransferase that acts as an axon maintenance factor. Axon survival factor required for the maintenance of healthy axons: acts by delaying Wallerian axon degeneration, an evolutionarily conserved process that drives the loss of damaged axons. Catalyzes the formation of NAD(+) from nicotinamide mononucleotide (NMN) and ATP. Can also use the deamidated form; nicotinic acid mononucleotide (NaMN) as substrate but with a lower efficiency. Cannot use triazofurin monophosphate (TrMP) as substrate. Also catalyzes the reverse reaction, i.e. the pyrophosphorolytic cleavage of NAD(+). For the pyrophosphorolytic activity prefers NAD(+), NADH and NaAD as substrates and degrades nicotinic acid adenine dinucleotide phosphate (NHD) less effectively. Fails to cleave phosphorylated dinucleotides NADP(+), NADPH and NaADP(+). Also acts as an activator of ADP-ribosylation by supporting the catalytic activity of PARP16 and promoting mono-ADP-ribosylation of ribosomes by PARP16. May be involved in the maintenance of axonal integrity. In Bos taurus (Bovine), this protein is Nicotinamide/nicotinic acid mononucleotide adenylyltransferase 2 (NMNAT2).